We begin with the raw amino-acid sequence, 106 residues long: SH3 domain-binding glutamic acid-rich-like protein 2-A (106 aa).

Residues 61-67 carry the SH3-binding motif; that stretch reads QGNPLPP.

This sequence belongs to the SH3BGR family.

The protein localises to the nucleus. This chain is SH3 domain-binding glutamic acid-rich-like protein 2-A (sh3bgrl2-a), found in Xenopus laevis (African clawed frog).